A 396-amino-acid chain; its full sequence is Acetate kinase (396 aa).

Position 7 (Asn7) interacts with Mg(2+). Residue Lys14 coordinates ATP. A substrate-binding site is contributed by Arg88. Asp145 functions as the Proton donor/acceptor in the catalytic mechanism. ATP contacts are provided by residues 205–209 (HLGNG), 279–281 (DFR), and 327–331 (GIGEN). Glu381 is a binding site for Mg(2+).

This sequence belongs to the acetokinase family. Homodimer. It depends on Mg(2+) as a cofactor. Mn(2+) is required as a cofactor.

Its subcellular location is the cytoplasm. The enzyme catalyses acetate + ATP = acetyl phosphate + ADP. It functions in the pathway metabolic intermediate biosynthesis; acetyl-CoA biosynthesis; acetyl-CoA from acetate: step 1/2. Functionally, catalyzes the formation of acetyl phosphate from acetate and ATP. Can also catalyze the reverse reaction. The polypeptide is Acetate kinase (Campylobacter jejuni subsp. doylei (strain ATCC BAA-1458 / RM4099 / 269.97)).